A 693-amino-acid polypeptide reads, in one-letter code: Elongation factor G (693 aa).

Residues 8-282 form the tr-type G domain; it reads EKTRNIGIMA…AVIDYLPSPL (275 aa). Residues 17–24, 81–85, and 135–138 each bind GTP; these read AHVDAGKT, DTPGH, and NKMD.

Belongs to the TRAFAC class translation factor GTPase superfamily. Classic translation factor GTPase family. EF-G/EF-2 subfamily.

The protein resides in the cytoplasm. In terms of biological role, catalyzes the GTP-dependent ribosomal translocation step during translation elongation. During this step, the ribosome changes from the pre-translocational (PRE) to the post-translocational (POST) state as the newly formed A-site-bound peptidyl-tRNA and P-site-bound deacylated tRNA move to the P and E sites, respectively. Catalyzes the coordinated movement of the two tRNA molecules, the mRNA and conformational changes in the ribosome. The protein is Elongation factor G of Streptococcus pneumoniae (strain ATCC 700669 / Spain 23F-1).